A 377-amino-acid polypeptide reads, in one-letter code: Probable O-methyltransferase 3 (377 aa).

D241 is an S-adenosyl-L-methionine binding site. H279 serves as the catalytic Proton acceptor.

The protein belongs to the class I-like SAM-binding methyltransferase superfamily. Cation-independent O-methyltransferase family. Highly expressed in lupulin glands. Detected in early-, mid- and late-stage cones.

The polypeptide is Probable O-methyltransferase 3 (Humulus lupulus (European hop)).